Reading from the N-terminus, the 202-residue chain is Holliday junction branch migration complex subunit RuvA (202 aa).

The interval 1-63 (MIEYLKGAIV…EDAHLLYGFS (63 aa)) is domain I. Positions 64 to 142 (TKEERTLFGQ…LETSSDEILS (79 aa)) are domain II. Positions 143–153 (ARTAVGDAALN) are flexible linker. A domain III region spans residues 153 to 202 (NTIASGEEAISALKMLGFADPAIRKAVKSILSEDSSLAVEDIIKRALRML).

This sequence belongs to the RuvA family. Homotetramer. Forms an RuvA(8)-RuvB(12)-Holliday junction (HJ) complex. HJ DNA is sandwiched between 2 RuvA tetramers; dsDNA enters through RuvA and exits via RuvB. An RuvB hexamer assembles on each DNA strand where it exits the tetramer. Each RuvB hexamer is contacted by two RuvA subunits (via domain III) on 2 adjacent RuvB subunits; this complex drives branch migration. In the full resolvosome a probable DNA-RuvA(4)-RuvB(12)-RuvC(2) complex forms which resolves the HJ.

Its subcellular location is the cytoplasm. Functionally, the RuvA-RuvB-RuvC complex processes Holliday junction (HJ) DNA during genetic recombination and DNA repair, while the RuvA-RuvB complex plays an important role in the rescue of blocked DNA replication forks via replication fork reversal (RFR). RuvA specifically binds to HJ cruciform DNA, conferring on it an open structure. The RuvB hexamer acts as an ATP-dependent pump, pulling dsDNA into and through the RuvAB complex. HJ branch migration allows RuvC to scan DNA until it finds its consensus sequence, where it cleaves and resolves the cruciform DNA. This Porphyromonas gingivalis (strain ATCC BAA-308 / W83) protein is Holliday junction branch migration complex subunit RuvA.